The following is a 505-amino-acid chain: Glutamate--tRNA ligase (505 aa).

The 'HIGH' region motif lies at 12–22; that stretch reads PSPTGDPHVGT. Positions 253 to 257 match the 'KMSKS' region motif; that stretch reads KLSKR. Position 256 (Lys-256) interacts with ATP.

The protein belongs to the class-I aminoacyl-tRNA synthetase family. Glutamate--tRNA ligase type 1 subfamily. As to quaternary structure, monomer.

The protein localises to the cytoplasm. The enzyme catalyses tRNA(Glu) + L-glutamate + ATP = L-glutamyl-tRNA(Glu) + AMP + diphosphate. Catalyzes the attachment of glutamate to tRNA(Glu) in a two-step reaction: glutamate is first activated by ATP to form Glu-AMP and then transferred to the acceptor end of tRNA(Glu). This is Glutamate--tRNA ligase from Chlamydia caviae (strain ATCC VR-813 / DSM 19441 / 03DC25 / GPIC) (Chlamydophila caviae).